The sequence spans 425 residues: Glutamyl-tRNA reductase (425 aa).

Substrate is bound by residues 49-52, serine 109, 114-116, and glutamine 120; these read TCNR and EGQ. Cysteine 50 functions as the Nucleophile in the catalytic mechanism. 189–194 is an NADP(+) binding site; that stretch reads GAGETG.

The protein belongs to the glutamyl-tRNA reductase family. Homodimer.

It carries out the reaction (S)-4-amino-5-oxopentanoate + tRNA(Glu) + NADP(+) = L-glutamyl-tRNA(Glu) + NADPH + H(+). It participates in porphyrin-containing compound metabolism; protoporphyrin-IX biosynthesis; 5-aminolevulinate from L-glutamyl-tRNA(Glu): step 1/2. The protein operates within porphyrin-containing compound metabolism; chlorophyll biosynthesis. Functionally, catalyzes the NADPH-dependent reduction of glutamyl-tRNA(Glu) to glutamate 1-semialdehyde (GSA). This chain is Glutamyl-tRNA reductase, found in Chlorobium luteolum (strain DSM 273 / BCRC 81028 / 2530) (Pelodictyon luteolum).